The chain runs to 344 residues: Cinnamoyl-CoA reductase 1 (344 aa).

S7 carries the post-translational modification Phosphoserine. Residues 17–23 (GAGGYIA), R42, K48, 68–69 (DL), 88–90 (TAS), Y161, K165, 188–191 (PVLV), and S203 contribute to the NADP(+) site. A disulfide bridge links C154 with C162. K165 (proton donor) is an active-site residue. The disordered stretch occupies residues 317 to 344 (QEKGHLAPPPPPPSASQESVENGIKIGS).

Belongs to the NAD(P)-dependent epimerase/dehydratase family. Dihydroflavonol-4-reductase subfamily. In terms of tissue distribution, expressed in leaves, stems and flowers.

The catalysed reaction is (E)-cinnamaldehyde + NADP(+) + CoA = (E)-cinnamoyl-CoA + NADPH + H(+). The protein operates within aromatic compound metabolism; phenylpropanoid biosynthesis. In terms of biological role, involved in the latter stages of lignin biosynthesis. Catalyzes one of the last steps of monolignol biosynthesis, the conversion of cinnamoyl-CoAs into their corresponding cinnamaldehydes. The chain is Cinnamoyl-CoA reductase 1 from Arabidopsis thaliana (Mouse-ear cress).